The primary structure comprises 270 residues: Putative pyruvate, phosphate dikinase regulatory protein (270 aa).

151–158 (GVSRTSKT) is an ADP binding site.

It belongs to the pyruvate, phosphate/water dikinase regulatory protein family. PDRP subfamily.

The catalysed reaction is N(tele)-phospho-L-histidyl/L-threonyl-[pyruvate, phosphate dikinase] + ADP = N(tele)-phospho-L-histidyl/O-phospho-L-threonyl-[pyruvate, phosphate dikinase] + AMP + H(+). It catalyses the reaction N(tele)-phospho-L-histidyl/O-phospho-L-threonyl-[pyruvate, phosphate dikinase] + phosphate + H(+) = N(tele)-phospho-L-histidyl/L-threonyl-[pyruvate, phosphate dikinase] + diphosphate. Functionally, bifunctional serine/threonine kinase and phosphorylase involved in the regulation of the pyruvate, phosphate dikinase (PPDK) by catalyzing its phosphorylation/dephosphorylation. In Streptococcus gordonii (strain Challis / ATCC 35105 / BCRC 15272 / CH1 / DL1 / V288), this protein is Putative pyruvate, phosphate dikinase regulatory protein.